The following is a 1876-amino-acid chain: Phenolphthiocerol/phthiocerol polyketide synthase subunit A (1876 aa).

Thr-2 carries the post-translational modification N-acetylthreonine. The Carrier 1 domain maps to 9–83; that stretch reads ADLRHWLIDY…ALAAYLAAPE (75 aa). Ser-43 carries the post-translational modification O-(pantetheine 4'-phosphoryl)serine. Positions 101–526 constitute a Ketosynthase family 3 (KS3) domain; that stretch reads DEPIAVVGMG…GTNAHVVIEQ (426 aa). Residues Cys-273, His-408, and His-448 each act as for beta-ketoacyl synthase activity in the active site. An acyltransferase region spans residues 626-950; the sequence is SPGPGTVFVY…NLNKAHTIHP (325 aa). The For malonyltransferase activity role is filled by Ser-720. The tract at residues 997-1112 is N-terminal hotdog fold; the sequence is HTTVATVSAS…AQLSSSPSDS (116 aa). Residues 997 to 1267 enclose the PKS/mFAS DH domain; it reads HTTVATVSAS…YRALDFGLDV (271 aa). The active-site Proton acceptor; for dehydratase activity is His-1027. The tract at residues 1102–1130 is disordered; sequence TAQLSSSPSDSASSLNEHHRANGQPPERA. Residues 1106 to 1115 are compositionally biased toward low complexity; the sequence is SSSPSDSASS. Positions 1130–1267 are C-terminal hotdog fold; the sequence is AHRDLIPDLA…YRALDFGLDV (138 aa). Residue Asp-1186 is the Proton donor; for dehydratase activity of the active site. 1491 to 1551 provides a ligand contact to NADP(+); it reads AAYLITGGLG…RRRIDAIRAL (61 aa). The segment at 1491–1728 is beta-ketoacyl reductase; it reads AAYLITGGLG…DGYDVAQAVV (238 aa). The region spanning 1759 to 1836 is the Carrier 2 domain; the sequence is EVRSELEQGL…SLASYLAKRV (78 aa). Ser-1796 is subject to O-(pantetheine 4'-phosphoryl)serine.

Requires NADP(+) as cofactor. The cofactor is pantetheine 4'-phosphate.

The catalysed reaction is icosanoyl-[(phenol)carboxyphthiodiolenone synthase] + 2 (S)-methylmalonyl-CoA + 3 malonyl-CoA + 5 NADPH + 10 H(+) = C32-carboxyphthiodiolenone-[(phenol)carboxyphthiodiolenone synthase] + 5 CO2 + 5 NADP(+) + 5 CoA + 2 H2O. It carries out the reaction docosanoyl-[(phenol)carboxyphthiodiolenone synthase] + 2 (S)-methylmalonyl-CoA + 3 malonyl-CoA + 5 NADPH + 10 H(+) = C34-carboxyphthiodiolenone-[(phenol)carboxyphthiodiolenone synthase] + 5 CO2 + 5 NADP(+) + 5 CoA + 2 H2O. It catalyses the reaction 17-(4-hydroxyphenyl)heptadecanoyl-[(phenol)carboxyphthiodiolenone synthase] + 2 (S)-methylmalonyl-CoA + 3 malonyl-CoA + 5 NADPH + 10 H(+) = C35-(phenol)carboxyphthiodiolenone-[(phenol)carboxyphthiodiolenone synthase] + 5 CO2 + 5 NADP(+) + 5 CoA + 2 H2O. The enzyme catalyses 19-(4-hydroxyphenyl)nonadecanoyl-[(phenol)carboxyphthiodiolenone synthase] + 2 (S)-methylmalonyl-CoA + 3 malonyl-CoA + 5 NADPH + 10 H(+) = C37-(phenol)carboxyphthiodiolenone-[(phenol)carboxyphthiodiolenone synthase] + 5 CO2 + 5 NADP(+) + 5 CoA + 2 H2O. The protein operates within lipid metabolism; fatty acid biosynthesis. Functionally, part of the PpsABCDE complex involved in the biosynthesis of the lipid core common to phthiocerols and phenolphthiocerols by successive additions of malonyl-CoA or methylmalonyl-CoA extender units. PpsA can accept as substrate the activated forms of either icosanoyl (C20), docosanoyl (C22) or lignoceroyl (C24) groups from FadD26, or a (4-hydroxyphenyl)-C17 or (4-hydroxyphenyl)-C19 fatty acyl from FadD29. PpsA initiates the biosynthesis and extends its substrate using a malonyl-CoA extender unit. The PpsB and PpsC proteins add the second and third malonyl-CoA extender units. PpsD adds an (R)-methylmalonyl unit and PpsE adds a second (R)-methylmalonyl unit. The incorporation of the methylmalonyl units results in formation of two branched methyl groups in the elongated product. This is Phenolphthiocerol/phthiocerol polyketide synthase subunit A (ppsA) from Mycobacterium tuberculosis (strain ATCC 25618 / H37Rv).